Here is a 276-residue protein sequence, read N- to C-terminus: 3beta-hydroxysteroid dehydrogenase (276 aa).

NADP(+) contacts are provided by residues 70–71 (DV), N97, Y162, and K166. Y162 acts as the Proton acceptor in catalysis.

The protein belongs to the short-chain dehydrogenases/reductases (SDR) family.

It catalyses the reaction 3-oxo-5beta-cholan-24-oate + NADPH + H(+) = isolithocholate + NADP(+). It carries out the reaction 12alpha-hydroxy-3-oxo-5beta-cholan-24-oate + NADPH + H(+) = isodeoxycholate + NADP(+). The enzyme catalyses 12alpha-hydroxy-3-oxo-5beta-cholan-24-oate + NADH + H(+) = isodeoxycholate + NAD(+). The catalysed reaction is 7alpha,12alpha-dihydroxy-3-oxo-5beta-cholan-24-oate + NADPH + H(+) = isocholate + NADP(+). It catalyses the reaction 3-oxochenodeoxycholate + NADPH + H(+) = isochenodeoxycholate + NADP(+). In terms of biological role, involved in the modification of secondary bile acids into iso-bile acids (3beta-bile acids) via epimerization of the 3-OH group through a 3-oxo-intermediate. Catalyzes the reduction of 12-alpha-hydroxy-3-oxo-5-beta-cholan-24-oate (3-oxo-DCA) and 3-oxo-5-beta-cholan-24-oate (3-oxo-LCA) to yield isodeoxycholate (isoDCA) and isolithocholate (isoLCA), respectively. Is also able to catalyze the reduction of 3-dehydrocholate (3-oxo-CA or 7alpha,12alpha-dihydroxy-3-oxo-5beta-cholan-24-oate) and 7-alpha-hydroxy-3-oxo-5-beta-cholan-24-oate (3-oxo-CDCA), into isocholate (isoCA) and isochenodeoxycholate (isoCDCA), respectively. Accepts both NADPH and NADH as cosubstrates. The conversion of the abundant bile acid deoxycholate (DCA) into isoDCA by the gut bacterium R.gnavus favors the growth of the keystone commensal genus Bacteroides, since isoDCA is less cytotoxic than its parent compound, DCA; iso-bile acids have thus a potential role in modulating gut community composition. In Mediterraneibacter gnavus (strain ATCC 29149 / DSM 114966 / JCM 6515 / VPI C7-9) (Ruminococcus gnavus), this protein is 3beta-hydroxysteroid dehydrogenase.